The primary structure comprises 369 residues: Protein RecA (369 aa).

ATP is bound at residue 66 to 73; the sequence is GPESSGKT. The interval 328–369 is disordered; it reads GIDAESLEEKEDPEKVKEQRAKKAAPGEEKPAEPASPEKTDK. The segment covering 339-369 has biased composition (basic and acidic residues); the sequence is DPEKVKEQRAKKAAPGEEKPAEPASPEKTDK.

This sequence belongs to the RecA family.

It is found in the cytoplasm. Can catalyze the hydrolysis of ATP in the presence of single-stranded DNA, the ATP-dependent uptake of single-stranded DNA by duplex DNA, and the ATP-dependent hybridization of homologous single-stranded DNAs. It interacts with LexA causing its activation and leading to its autocatalytic cleavage. This is Protein RecA from Lactobacillus delbrueckii subsp. bulgaricus (strain ATCC BAA-365 / Lb-18).